Consider the following 127-residue polypeptide: Small ribosomal subunit protein uS11 (127 aa).

Belongs to the universal ribosomal protein uS11 family. In terms of assembly, part of the 30S ribosomal subunit. Interacts with proteins S7 and S18. Binds to IF-3.

Functionally, located on the platform of the 30S subunit, it bridges several disparate RNA helices of the 16S rRNA. Forms part of the Shine-Dalgarno cleft in the 70S ribosome. The sequence is that of Small ribosomal subunit protein uS11 from Rickettsia prowazekii (strain Madrid E).